We begin with the raw amino-acid sequence, 778 residues long: Phenylalanine--tRNA ligase beta subunit (778 aa).

A tRNA-binding domain is found at 39-150 (YEVPQKIVFG…GKYKIGEEVS (112 aa)). Positions 391 to 467 (HEDKIISLNK…RLVGIDNIPS (77 aa)) constitute a B5 domain. Asp-445, Asp-451, Glu-454, and Glu-455 together coordinate Mg(2+). One can recognise an FDX-ACB domain in the interval 686 to 778 (SKYQASFRDL…LKNQLGVGIR (93 aa)).

It belongs to the phenylalanyl-tRNA synthetase beta subunit family. Type 1 subfamily. Tetramer of two alpha and two beta subunits. Mg(2+) serves as cofactor.

The protein resides in the cytoplasm. The catalysed reaction is tRNA(Phe) + L-phenylalanine + ATP = L-phenylalanyl-tRNA(Phe) + AMP + diphosphate + H(+). The polypeptide is Phenylalanine--tRNA ligase beta subunit (Sulfurimonas denitrificans (strain ATCC 33889 / DSM 1251) (Thiomicrospira denitrificans (strain ATCC 33889 / DSM 1251))).